The chain runs to 819 residues: Zinc finger protein 27 (819 aa).

The KRAB domain occupies 1–75 (MDVTIDFSRE…KTLGAESCHD (75 aa)). Residues 93-123 (PKRPRHWDPPEDEPKHSSDLQTHDESNGLKR) are disordered. Residues 98 to 120 (HWDPPEDEPKHSSDLQTHDESNG) show a composition bias toward basic and acidic residues. C2H2-type zinc fingers lie at residues 205-227 (YVCV…QKTH), 233-255 (YKCG…RRIH), 261-283 (YDCS…QKIH), 289-311 (HGCV…QKIH), 317-339 (YVCI…RRIH), 345-367 (YACD…QRIH), 401-423 (SICA…QRTH), 429-451 (YQCG…RRIH), 457-479 (YVCV…QVIH), 485-507 (YQCG…KRIH), 513-535 (YVCS…QKTH), 541-563 (YVCA…QRIH), 569-591 (YGCS…EKIH), 597-619 (YGCR…QKIH), 625-647 (HVCA…QRIH), 653-675 (YGCT…RPIH), 681-703 (YVCA…QKTH), 709-731 (YACS…HRIH), 737-759 (YDCG…QRIH), 765-787 (YRCA…QTTH), and 793-815 (YKCV…ENVH).

Belongs to the krueppel C2H2-type zinc-finger protein family.

The protein resides in the nucleus. May be involved in transcriptional regulation. This chain is Zinc finger protein 27 (Zfp27), found in Mus musculus (Mouse).